Here is a 488-residue protein sequence, read N- to C-terminus: MALLCLDGVFLSSAENDFVHRVQEELDRFLLQKQLSKVLLFPPVSSRLRYLIHRTAENFDLLSSFSVGEGWKRRTVICHLDIRVPSSDGPSGPCRPPASHPSKYRGPRYTSHQGAAAGPRGAPAGRWHRGRKPDQPLYVPRVLRRQGGPVAASIPGIKGEDPAGAVSEEEPREAGAGDAEADQGIAMLVTQELLKSPDPGHANEPQMGLGDTEPSENPEKEQGAETAVQQGSGAQLAMEEENRSHGMRSLVDQEEEEIEGEEEEKVDEKEEDTGKQKERVDEEEEKTDAQEGKVDSEGERMDEGEDKVDAEEEDEDEADADHGDFSELLQEITANLTEKEIKIEKIHLDTSAFTEELPGERDLTHLVEIYDFKPTLKTEDLLATFSEFQEKGFRIQWVDDTHAIGIFPCPASALEALAKDFSVLKIRPLTQGTKQSKLKALQRPKFLRLSKERPQTDSAVARRLVARALGLQHNRKKELPTPPSVLPS.

Positions 16–81 constitute an R3H domain; it reads NDFVHRVQEE…KRRTVICHLD (66 aa). Disordered regions lie at residues 87 to 180 and 195 to 322; these read SDGP…GDAE and KSPD…DADH. Low complexity predominate over residues 114 to 125; sequence GAAAGPRGAPAG. Position 232 is a phosphoserine (Ser-232). Positions 244 to 321 form a coiled coil; that stretch reads SHGMRSLVDQ…EEDEDEADAD (78 aa). A compositionally biased stretch (acidic residues) spans 252–265; it reads DQEEEEIEGEEEEK. 2 stretches are compositionally biased toward basic and acidic residues: residues 266–280 and 287–301; these read VDEK…KERV and TDAQ…GERM. A compositionally biased stretch (acidic residues) spans 302–319; it reads DEGEDKVDAEEEDEDEAD.

This chain is R3H and coiled-coil domain-containing protein 1, found in Mus musculus (Mouse).